A 305-amino-acid polypeptide reads, in one-letter code: Protoheme IX farnesyltransferase (305 aa).

A run of 9 helical transmembrane segments spans residues 31–51 (IQVLLLITTAGAMWIAGKGHV), 53–73 (PLLLLVTLLGGTLAASSANAF), 98–118 (ILPWQAALFATALGVASFAVL), 124–144 (LFAALLAISGIGFYVVIYTLW), 153–173 (IVIGGAAGAIPPLVGWAAVTG), 181–201 (VLFGIIFMWTPPHFWALAMMI), 221–241 (ATARQIFIYTLVLVPVTLVLY), 242–262 (PLGTMGWIYLLAAGALGLWLI), and 285–305 (SIFYLMLLFVAMGIDSIFLFA).

Belongs to the UbiA prenyltransferase family. Protoheme IX farnesyltransferase subfamily.

It localises to the cell inner membrane. The enzyme catalyses heme b + (2E,6E)-farnesyl diphosphate + H2O = Fe(II)-heme o + diphosphate. It participates in porphyrin-containing compound metabolism; heme O biosynthesis; heme O from protoheme: step 1/1. Its function is as follows. Converts heme B (protoheme IX) to heme O by substitution of the vinyl group on carbon 2 of heme B porphyrin ring with a hydroxyethyl farnesyl side group. The polypeptide is Protoheme IX farnesyltransferase (Gloeobacter violaceus (strain ATCC 29082 / PCC 7421)).